Reading from the N-terminus, the 188-residue chain is Peptide deformylase (188 aa).

Residues C107 and H149 each coordinate Fe cation. E150 is a catalytic residue. H153 contacts Fe cation.

The protein belongs to the polypeptide deformylase family. It depends on Fe(2+) as a cofactor.

It catalyses the reaction N-terminal N-formyl-L-methionyl-[peptide] + H2O = N-terminal L-methionyl-[peptide] + formate. Its function is as follows. Removes the formyl group from the N-terminal Met of newly synthesized proteins. Requires at least a dipeptide for an efficient rate of reaction. N-terminal L-methionine is a prerequisite for activity but the enzyme has broad specificity at other positions. This chain is Peptide deformylase, found in Thermosynechococcus vestitus (strain NIES-2133 / IAM M-273 / BP-1).